Consider the following 473-residue polypeptide: PTS system trehalose-specific EIIBC component (473 aa).

The 89-residue stretch at 1 to 89 (MMSKINQTDI…IASTGQAQVD (89 aa)) folds into the PTS EIIB type-1 domain. Residues 1–110 (MMSKINQTDI…MKWHEQLISH (110 aa)) lie on the Cytoplasmic side of the membrane. Catalysis depends on Cys29, which acts as the Phosphocysteine intermediate; for EIIB activity. A Phosphocysteine; by EIIA modification is found at Cys29. Residues 109–473 (SHFAVIFFPL…KYRLGTLDIV (365 aa)) enclose the PTS EIIC type-1 domain. The helical transmembrane segment at 111–131 (FAVIFFPLLPALISGGLILGF) threads the bilayer. Residues 132-158 (RNVIGDLPMSNGQTLAQMYPSLQTIYD) lie on the Periplasmic side of the membrane. A helical membrane pass occupies residues 159 to 179 (FLWLIGEAIFFYLPVGICWSA). The Cytoplasmic segment spans residues 180-187 (VKKMGGTP). A helical membrane pass occupies residues 188-208 (ILGIVLGVTLVSPQLMNAYLL). The Periplasmic segment spans residues 209–225 (GQQLPEVWDFGMFSIAK). Residues 226–246 (VGYQAQVIPALLAGLALGVIE) form a helical membrane-spanning segment. Residues 247 to 258 (TRLKRIVPDYLY) lie on the Cytoplasmic side of the membrane. Residues 259–279 (LVVVPVCSLILAVFLAHALIG) traverse the membrane as a helical segment. Over 280–300 (PFGRMIGDGVAFAVRHLMTGS) the chain is Periplasmic. A helical membrane pass occupies residues 301 to 321 (FAPIGAALFGFLYAPLVITGV). Over 322-340 (HQTTLAIDLQMIQSMGGTP) the chain is Cytoplasmic. The chain crosses the membrane as a helical span at residues 341-361 (VWPLIALSNIAQGSAVIGIII). The Periplasmic portion of the chain corresponds to 362 to 370 (SSRKHNERE). The helical transmembrane segment at 371-391 (ISVPAAISAWLGVTEPAMYGI) threads the bilayer. The Cytoplasmic segment spans residues 392–398 (NLKYRFP). The helical transmembrane segment at 399–419 (MLCAMIGSGLAGLLCGLNGVM) threads the bilayer. Over 420-440 (ANGIGVGGLPGILSIQPSYWQ) the chain is Periplasmic. Residues 441–461 (VFALAMAIAIIIPIVLTSFIY) traverse the membrane as a helical segment. Topologically, residues 462-473 (QRKYRLGTLDIV) are cytoplasmic.

Its subcellular location is the cell inner membrane. It catalyses the reaction alpha,alpha-trehalose(out) + N(pros)-phospho-L-histidyl-[protein] = alpha,alpha-trehalose 6-phosphate(in) + L-histidyl-[protein]. In terms of biological role, the phosphoenolpyruvate-dependent sugar phosphotransferase system (sugar PTS), a major carbohydrate active transport system, catalyzes the phosphorylation of incoming sugar substrates concomitantly with their translocation across the cell membrane. This system is involved in trehalose transport at low osmolarity. In Escherichia coli (strain K12), this protein is PTS system trehalose-specific EIIBC component (treB).